The following is a 297-amino-acid chain: Carbamate kinase (297 aa).

It belongs to the carbamate kinase family.

It is found in the cytoplasm. It catalyses the reaction hydrogencarbonate + NH4(+) + ATP = carbamoyl phosphate + ADP + H2O + H(+). It carries out the reaction carbamate + ATP = carbamoyl phosphate + ADP. The catalysed reaction is hydrogencarbonate + NH4(+) = carbamate + H2O + H(+). Its pathway is nitrogen metabolism; (S)-allantoin degradation. Kinase involved in the anaerobic nitrogen utilization via the assimilation of allantoin. Catalyzes the transfer of a phosphate group from carbamoyl phosphate to ADP to produce ATP and leave carbamate, which spontaneously hydrolyzes to ammonia and hydrogencarbonate. This chain is Carbamate kinase, found in Escherichia coli (strain K12).